The primary structure comprises 369 residues: Glutamate 5-kinase (369 aa).

Lys9 provides a ligand contact to ATP. Substrate-binding residues include Ser49, Asp136, and Asn148. Residues 168–169 and 210–216 contribute to the ATP site; these read TD and TGGMLTK. The PUA domain maps to 275–355; that stretch reads QGSIWVDKGA…KGVLIYRDDW (81 aa).

It belongs to the glutamate 5-kinase family.

The protein resides in the cytoplasm. The catalysed reaction is L-glutamate + ATP = L-glutamyl 5-phosphate + ADP. It participates in amino-acid biosynthesis; L-proline biosynthesis; L-glutamate 5-semialdehyde from L-glutamate: step 1/2. Catalyzes the transfer of a phosphate group to glutamate to form L-glutamate 5-phosphate. This chain is Glutamate 5-kinase, found in Streptococcus pneumoniae serotype 2 (strain D39 / NCTC 7466).